Reading from the N-terminus, the 61-residue chain is Metallothionein-2 (61 aa).

Methionine 1 is modified (N-acetylmethionine). Residues 1–29 (MDPNCSCAAGGSCTCAGSCKCKECRCTSC) are beta. Cysteine 5, cysteine 7, cysteine 13, cysteine 15, cysteine 19, cysteine 21, cysteine 24, cysteine 26, cysteine 29, cysteine 33, cysteine 34, cysteine 36, cysteine 37, cysteine 41, cysteine 44, cysteine 48, cysteine 50, and cysteine 57 together coordinate a divalent metal cation. The tract at residues 30 to 61 (KKSCCSCCPVGCAKCAQGCICKGASDKCSCCA) is alpha. Phosphoserine is present on serine 58. The a divalent metal cation site is built by cysteine 59 and cysteine 60.

The protein belongs to the metallothionein superfamily. Type 1 family. Interacts with EOLA1.

In terms of biological role, metallothioneins have a high content of cysteine residues that bind various heavy metals; these proteins are transcriptionally regulated by both heavy metals and glucocorticoids. The sequence is that of Metallothionein-2 (MT2A) from Canis lupus familiaris (Dog).